We begin with the raw amino-acid sequence, 193 residues long: Ras-like protein 2 (193 aa).

Position 12-19 (12-19) interacts with GTP; that stretch reads GGGGVGKS. The Effector region motif lies at 34–42; that stretch reads YDPTIEDSY. Residues 59 to 63 and 118 to 121 contribute to the GTP site; these read DTAGQ and NKCD. Residue C190 is modified to Cysteine methyl ester. Residue C190 is the site of S-geranylgeranyl cysteine attachment. A propeptide spans 191–193 (removed in mature form); sequence KLL.

This sequence belongs to the small GTPase superfamily. Ras family.

Its subcellular location is the cell membrane. It carries out the reaction GTP + H2O = GDP + phosphate + H(+). Its function is as follows. Ras proteins bind GDP/GTP and possess intrinsic GTPase activity. The chain is Ras-like protein 2 (RAS-2) from Physarum polycephalum (Slime mold).